Consider the following 498-residue polypeptide: Probable cytosol aminopeptidase (498 aa).

Residues Lys-262 and Asp-267 each contribute to the Mn(2+) site. The active site involves Lys-274. Asp-285, Asp-344, and Glu-346 together coordinate Mn(2+). Residue Arg-348 is part of the active site.

Belongs to the peptidase M17 family. Mn(2+) is required as a cofactor.

It is found in the cytoplasm. The enzyme catalyses Release of an N-terminal amino acid, Xaa-|-Yaa-, in which Xaa is preferably Leu, but may be other amino acids including Pro although not Arg or Lys, and Yaa may be Pro. Amino acid amides and methyl esters are also readily hydrolyzed, but rates on arylamides are exceedingly low.. It carries out the reaction Release of an N-terminal amino acid, preferentially leucine, but not glutamic or aspartic acids.. Its function is as follows. Presumably involved in the processing and regular turnover of intracellular proteins. Catalyzes the removal of unsubstituted N-terminal amino acids from various peptides. The protein is Probable cytosol aminopeptidase of Phytoplasma mali (strain AT).